We begin with the raw amino-acid sequence, 351 residues long: MEPAPGLVEQPKCLEAGSPEPEPAPWQALPVLSEKQSGDVELVLAYAAPVLDKRQTSRLLKEVSALHPLPAQPHLKRVRPSRDAGSPHALEMLLCLAGPASGPRSLAELLPRPAVDPRGLGQPFLVPVPARPPLTRGQFEEARAHWPTSFHEDKQVTSALAGRLFSTQERAAMQSHMERAVWAARRAAARGLRAVGAVVVDPASDRVLATGHDCSCADNPLLHAVMVCVDLVARGQGRGTYDFRPFPACSFAPAAAPQAVRAGAVRKLDADEDGLPYLCTGYDLYVTREPCAMCAMALVHARILRVFYGAPSPDGALGTRFRIHARPDLNHRFQVFRGVLEEQCRWLDPDT.

The residue at position 1 (Met-1) is an N-acetylmethionine. The tract at residues 1-26 (MEPAPGLVEQPKCLEAGSPEPEPAPW) is disordered. In terms of domain architecture, CMP/dCMP-type deaminase spans 171-336 (AAMQSHMERA…PDLNHRFQVF (166 aa)). 3 residues coordinate Zn(2+): His-223, Cys-291, and Cys-294.

Belongs to the cytidine and deoxycytidylate deaminase family. ADAT3 subfamily. Zn(2+) is required as a cofactor.

The chain is Probable inactive tRNA-specific adenosine deaminase-like protein 3 (ADAT3) from Homo sapiens (Human).